Reading from the N-terminus, the 334-residue chain is Beta-glucanase (334 aa).

Positions 1–27 (MKNRVISLLMASLLLVLSVIVAPFYKA) are cleaved as a signal peptide. The GH16 domain occupies 28-248 (EAATVVNTPF…YVKYYPNGVP (221 aa)). Catalysis depends on Glu136, which acts as the Nucleophile. Glu140 functions as the Proton donor in the catalytic mechanism. Residues 246–265 (GVPQDNPTPTPTIAPSTPTN) are disordered. Positions 267–334 (NLPLKGDVNG…RYLIRAIPSL (68 aa)) constitute a Dockerin domain.

Belongs to the glycosyl hydrolase 16 family.

It carries out the reaction Hydrolysis of (1-&gt;4)-beta-D-glucosidic linkages in beta-D-glucans containing (1-&gt;3)- and (1-&gt;4)-bonds.. This is Beta-glucanase (licB) from Acetivibrio thermocellus (Hungateiclostridium thermocellum).